The chain runs to 501 residues: MAILQSFLLLLSLPFLFTLIYTKKMKESKRNLPPGPAKLPIVGNLHQLQGMVHRCLHELSKKHGPVMHLQLGFVPLVLISSSEAAEEALKTHDIECCTRPNTNAARVFSRNNKNIGLGAYSDEWRELRKVAVREYFSVKKVQSFRYVREEENHLMVKKLRDLALKQSPVDLSKTLFCLAASTVFRPVFGQSFSDNKHFSEEKIEELVFEAQKSLTFKFSDLFPIPGLGWFIGFVSGQHKGLHKVFIEVDNFLNHMIDDHQKQNQPQDRSDIVGSLLDMIHNQEQDKSFKLTIDHLKGITQDIFLAGIDTSAITMIWAMAELVNNPRVMKKVQDEIRSCIGIKKERIEEEDVGKLQYLKLVIKETLRLHPAAPLLLPRETMADIKIQGYDIPRKTLLLVSAWSLGRDPKYWKNPEEFNPERFIDCPVDYKGHSFEFLPFGSGRRFCPGMASAIATIELTLLNLLYFFDWKLPEEMKDMNMEESGDVTIVKKVPLELLPVLYH.

The chain crosses the membrane as a helical span at residues 1–21 (MAILQSFLLLLSLPFLFTLIY). Cys445 lines the heme pocket.

The protein belongs to the cytochrome P450 family. The cofactor is heme.

It is found in the membrane. This is Cytochrome P450 71B25 (CYP71B25) from Arabidopsis thaliana (Mouse-ear cress).